Here is a 185-residue protein sequence, read N- to C-terminus: MANEVIEKAKDNMKKSIAVFQKELGGIRAGVANASLLDGIKVNYYGVPTPLTQMSSVSIPEARVLMVTPYDKSTLDDIEHAILASDLGITPANDGTVIRIVIPQLTGERRQEIAKQVGKLAEKGKIAVRNVRRDAMDTLKRQEKDGDITEDEQRSLEKQVQKVTDDATKEIDKLADQKSQEITQG.

The segment at 140 to 166 (KRQEKDGDITEDEQRSLEKQVQKVTDD) is disordered.

It belongs to the RRF family.

The protein resides in the cytoplasm. Responsible for the release of ribosomes from messenger RNA at the termination of protein biosynthesis. May increase the efficiency of translation by recycling ribosomes from one round of translation to another. This chain is Ribosome-recycling factor, found in Lactobacillus johnsonii (strain CNCM I-12250 / La1 / NCC 533).